The chain runs to 448 residues: Glutamate--tRNA ligase (448 aa).

Positions 10 to 20 match the 'HIGH' region motif; it reads PSPTGFLHIGN. The short motif at 214–218 is the 'KMSKS' region element; the sequence is KLSKR. Lys217 contacts ATP.

The protein belongs to the class-I aminoacyl-tRNA synthetase family. Glutamate--tRNA ligase type 1 subfamily. As to quaternary structure, monomer.

The protein resides in the cytoplasm. The catalysed reaction is tRNA(Glu) + L-glutamate + ATP = L-glutamyl-tRNA(Glu) + AMP + diphosphate. Functionally, catalyzes the attachment of glutamate to tRNA(Glu) in a two-step reaction: glutamate is first activated by ATP to form Glu-AMP and then transferred to the acceptor end of tRNA(Glu). This Phytoplasma australiense protein is Glutamate--tRNA ligase.